Reading from the N-terminus, the 286-residue chain is Serine carboxypeptidase-like (286 aa).

Residue S4 is part of the active site. Disulfide bonds link C83–C98 and C121–C126. D193 is an active-site residue. Residue C196 participates in substrate binding. An N-linked (GlcNAc...) asparagine glycan is attached at N227. H250 is an active-site residue.

Belongs to the peptidase S10 family.

In terms of biological role, involved in degradation of small peptides. The protein is Serine carboxypeptidase-like of Pisum sativum (Garden pea).